Reading from the N-terminus, the 110-residue chain is Large ribosomal subunit protein mL60 (110 aa).

It belongs to the mitochondrion-specific ribosomal protein mL60 family. Component of the mitochondrial large ribosomal subunit (mt-LSU). Mature N.crassa 74S mitochondrial ribosomes consist of a small (37S) and a large (54S) subunit. The 37S small subunit contains a 16S ribosomal RNA (16S mt-rRNA) and 32 different proteins. The 54S large subunit contains a 23S rRNA (23S mt-rRNA) and 42 different proteins.

The protein resides in the mitochondrion. Component of the mitochondrial ribosome (mitoribosome), a dedicated translation machinery responsible for the synthesis of mitochondrial genome-encoded proteins, including at least some of the essential transmembrane subunits of the mitochondrial respiratory chain. The mitoribosomes are attached to the mitochondrial inner membrane and translation products are cotranslationally integrated into the membrane. The protein is Large ribosomal subunit protein mL60 (mrpl31) of Neurospora crassa (strain ATCC 24698 / 74-OR23-1A / CBS 708.71 / DSM 1257 / FGSC 987).